We begin with the raw amino-acid sequence, 163 residues long: Phosphopantetheine adenylyltransferase (163 aa).

Ser9 contacts substrate. Residues Ser9–Phe10 and His17 each bind ATP. Substrate is bound by residues Lys41, Thr73, and Arg87. Residues Gly88–Arg90, Glu98, and Tyr123–Ser129 contribute to the ATP site.

It belongs to the bacterial CoaD family. In terms of assembly, homohexamer. Mg(2+) is required as a cofactor.

It localises to the cytoplasm. It carries out the reaction (R)-4'-phosphopantetheine + ATP + H(+) = 3'-dephospho-CoA + diphosphate. It functions in the pathway cofactor biosynthesis; coenzyme A biosynthesis; CoA from (R)-pantothenate: step 4/5. In terms of biological role, reversibly transfers an adenylyl group from ATP to 4'-phosphopantetheine, yielding dephospho-CoA (dPCoA) and pyrophosphate. The chain is Phosphopantetheine adenylyltransferase from Lactiplantibacillus plantarum (strain ATCC BAA-793 / NCIMB 8826 / WCFS1) (Lactobacillus plantarum).